Reading from the N-terminus, the 296-residue chain is Nucleotide-binding protein SAG0531 (296 aa).

13–20 provides a ligand contact to ATP; sequence GMSGAGKT. Position 63 to 66 (63 to 66) interacts with GTP; it reads DMRS.

It belongs to the RapZ-like family.

Displays ATPase and GTPase activities. The protein is Nucleotide-binding protein SAG0531 of Streptococcus agalactiae serotype V (strain ATCC BAA-611 / 2603 V/R).